The following is an 81-amino-acid chain: Large ribosomal subunit protein eL31 (81 aa).

It belongs to the eukaryotic ribosomal protein eL31 family.

This is Large ribosomal subunit protein eL31 (rpl31e) from Methanothermobacter thermautotrophicus (strain ATCC 29096 / DSM 1053 / JCM 10044 / NBRC 100330 / Delta H) (Methanobacterium thermoautotrophicum).